The primary structure comprises 99 residues: Signal recognition particle 19 kDa protein (99 aa).

The protein belongs to the SRP19 family. As to quaternary structure, part of the signal recognition particle protein translocation system, which is composed of SRP and FtsY. Archaeal SRP consists of a 7S RNA molecule of 300 nucleotides and two protein subunits: SRP54 and SRP19.

It localises to the cytoplasm. Its function is as follows. Involved in targeting and insertion of nascent membrane proteins into the cytoplasmic membrane. Binds directly to 7S RNA and mediates binding of the 54 kDa subunit of the SRP. In Pyrococcus horikoshii (strain ATCC 700860 / DSM 12428 / JCM 9974 / NBRC 100139 / OT-3), this protein is Signal recognition particle 19 kDa protein.